A 164-amino-acid chain; its full sequence is ATP synthase subunit b (164 aa).

The chain crosses the membrane as a helical span at residues 6–26 (GELVGNFILVTGSVIVLLLLI).

Belongs to the ATPase B chain family. In terms of assembly, F-type ATPases have 2 components, F(1) - the catalytic core - and F(0) - the membrane proton channel. F(1) has five subunits: alpha(3), beta(3), gamma(1), delta(1), epsilon(1). F(0) has three main subunits: a(1), b(2) and c(10-14). The alpha and beta chains form an alternating ring which encloses part of the gamma chain. F(1) is attached to F(0) by a central stalk formed by the gamma and epsilon chains, while a peripheral stalk is formed by the delta and b chains.

It is found in the cell membrane. Its function is as follows. F(1)F(0) ATP synthase produces ATP from ADP in the presence of a proton or sodium gradient. F-type ATPases consist of two structural domains, F(1) containing the extramembraneous catalytic core and F(0) containing the membrane proton channel, linked together by a central stalk and a peripheral stalk. During catalysis, ATP synthesis in the catalytic domain of F(1) is coupled via a rotary mechanism of the central stalk subunits to proton translocation. In terms of biological role, component of the F(0) channel, it forms part of the peripheral stalk, linking F(1) to F(0). The protein is ATP synthase subunit b of Streptococcus pyogenes serotype M6 (strain ATCC BAA-946 / MGAS10394).